Here is an 897-residue protein sequence, read N- to C-terminus: MDNFENPLLAPDQDVLLYLLDGYSQLQQLQKQQFNIHDDNINYNNNNNNNNNNNNNNNNNNNNNNNNNNNNNNNNIGSPQIMNENIETNSNDPQYLERLQSIQQQQHQCQTQIQQQLQNYQQQYEDQYQQRQQQYQDQYQKPYSSPPLNFNSIPPITNNNNNNNNNNNNNNNNNNSNSNSNSNSNSNSNSNSNSNSNSNNNNINNNICINNNDISIFLLNNQIQLQPLQQQQQQQQQQQQQQQQQQQQQQQQQQQQQQPTQPTQPTKPIQLTQPIQLTQPTLLEELKDISIQQQLLSAIQQTAQSPQQIHPLQQLQPYQLQSYQQIQASQQLQPYQQLIQLQQLQLQQLEEEKRQQQKQLLLQQQQLQEQQEKLQQQLLQQQKQQLKQKVKQQKQQHQKQQPQQQQQSIQIPPELQNYILNNNNNNNNNNTNKTLSPISEMIQNQFLNNQQTILNQNNSTLQLPTPFYSPQQQQQQHTPISSFIPPPSLPSSPPSPPSPPSPPPQQQQQQQQQQQQQQQQQQQQQQQQQQQQQQQLQQQQLQQQQLQQQHQLKESYESKESIKKYNQNIASRNYRLKKKDYIKEIENKIATLSLENNRLEKENGSIRTNGSIEMMRMEPESMKMLMDGKLIIENIKHALIIDDEKSLIYLLHQYHRTIDQRYSLLEKEVNKLINPYTQLRLCCIGYVPKSSPLVLNIFQGPESDKWLNLFKIEANITPEQSIKIDSLRFQYGKVSSRLSNELLELDLIIKRFFIKNVLPTPDTPLLNSDYYSEGELIPNTTTESIAPLNNFELLDFASKLESLKNKIILNASLGLDTFATLCSILTPKQEALLLVRVNLFCIDLHHHDILGEVWTNVNQISNSLSNPLTSFSDSMKKINFSFLQLDNNNNNYHYKIN.

Disordered stretches follow at residues D38–T88 and Y128–S198. Positions N44–N75 are enriched in low complexity. Over residues I76 to T88 the composition is skewed to polar residues. A coiled-coil region spans residues Q94–D137. The segment covering Y128–Q140 has biased composition (low complexity). Residues K141–T157 are compositionally biased toward polar residues. The span at N158–S198 shows a compositional bias: low complexity. Coiled-coil stretches lie at residues L228–Q258 and Q330–Q407. Residues L461–Q516 form a disordered region. Over residues I484–Q505 the composition is skewed to pro residues. A compositionally biased stretch (low complexity) spans Q506–Q516. The bZIP domain maps to E557 to E620. The interval K559 to K564 is basic motif. Positions I569–L576 are leucine-zipper.

This sequence belongs to the bZIP family.

The protein resides in the nucleus. Functionally, probable transcriptional regulator. The protein is Probable basic-leucine zipper transcription factor R (bzpR) of Dictyostelium discoideum (Social amoeba).